The sequence spans 140 residues: Cytochrome c-type biogenesis protein CcmE (140 aa).

Residues 1–7 (MKRKHKR) lie on the Cytoplasmic side of the membrane. The chain crosses the membrane as a helical; Signal-anchor for type II membrane protein span at residues 8–28 (LLFVLASFCAAGCALLFILSE). Residues 29 to 140 (LRESVSFFYT…TAPKSSPEPK (112 aa)) are Periplasmic-facing. 2 residues coordinate heme: His-121 and Tyr-125.

It belongs to the CcmE/CycJ family.

Its subcellular location is the cell inner membrane. Its function is as follows. Heme chaperone required for the biogenesis of c-type cytochromes. Transiently binds heme delivered by CcmC and transfers the heme to apo-cytochromes in a process facilitated by CcmF and CcmH. The polypeptide is Cytochrome c-type biogenesis protein CcmE (Anaplasma marginale (strain St. Maries)).